A 322-amino-acid chain; its full sequence is Methionyl-tRNA formyltransferase (322 aa).

Residue 112–115 (SLLP) coordinates (6S)-5,6,7,8-tetrahydrofolate.

This sequence belongs to the Fmt family.

It catalyses the reaction L-methionyl-tRNA(fMet) + (6R)-10-formyltetrahydrofolate = N-formyl-L-methionyl-tRNA(fMet) + (6S)-5,6,7,8-tetrahydrofolate + H(+). Attaches a formyl group to the free amino group of methionyl-tRNA(fMet). The formyl group appears to play a dual role in the initiator identity of N-formylmethionyl-tRNA by promoting its recognition by IF2 and preventing the misappropriation of this tRNA by the elongation apparatus. This chain is Methionyl-tRNA formyltransferase, found in Synechococcus sp. (strain JA-3-3Ab) (Cyanobacteria bacterium Yellowstone A-Prime).